A 457-amino-acid chain; its full sequence is ATP synthase subunit beta (457 aa).

Residue 147–154 coordinates ATP; sequence GGAGVGKT.

It belongs to the ATPase alpha/beta chains family. In terms of assembly, F-type ATPases have 2 components, CF(1) - the catalytic core - and CF(0) - the membrane proton channel. CF(1) has five subunits: alpha(3), beta(3), gamma(1), delta(1), epsilon(1). CF(0) has three main subunits: a(1), b(2) and c(9-12). The alpha and beta chains form an alternating ring which encloses part of the gamma chain. CF(1) is attached to CF(0) by a central stalk formed by the gamma and epsilon chains, while a peripheral stalk is formed by the delta and b chains.

It localises to the cell inner membrane. The enzyme catalyses ATP + H2O + 4 H(+)(in) = ADP + phosphate + 5 H(+)(out). Functionally, produces ATP from ADP in the presence of a proton gradient across the membrane. The catalytic sites are hosted primarily by the beta subunits. The sequence is that of ATP synthase subunit beta from Haemophilus influenzae (strain PittEE).